We begin with the raw amino-acid sequence, 184 residues long: ADP-ribosylation factor-like protein 2 (184 aa).

G2 is lipidated: N-myristoyl glycine. Residue 23-30 participates in GTP binding; the sequence is GLDNAGKT. The residue at position 45 (S45) is a Phosphoserine. GTP contacts are provided by residues 66–70 and G68; that span reads DVGGQ. K71 is covalently cross-linked (Glycyl lysine isopeptide (Lys-Gly) (interchain with G-Cter in ubiquitin)). Residue 125–128 participates in GTP binding; sequence NKQD.

Belongs to the small GTPase superfamily. Arf family. As to quaternary structure, found in a complex with ARL2, ARL2BP and SLC25A6. Found in a complex with at least ARL2, PPP2CB, PPP2R1A, PPP2R2A, PPP2R5E and TBCD. Found in a complex with ARL2, ARL2BP and SLC25A4. The GTP-bound form interacts with PDE6D. Interacts with ELMOD2. The GTP-bound form interacts with ARL2BP. Interacts, preferentially in its GDP-bound state, with TBCD. Interacts with UNC119. Post-translationally, not N-myristoylated.

Its subcellular location is the mitochondrion intermembrane space. It localises to the cytoplasm. It is found in the cytoskeleton. The protein localises to the microtubule organizing center. The protein resides in the centrosome. Its subcellular location is the nucleus. Its function is as follows. Small GTP-binding protein which cycles between an inactive GDP-bound and an active GTP-bound form, and the rate of cycling is regulated by guanine nucleotide exchange factors (GEF) and GTPase-activating proteins (GAP). GTP-binding protein that does not act as an allosteric activator of the cholera toxin catalytic subunit. Regulates formation of new microtubules and centrosome integrity. Prevents the TBCD-induced microtubule destruction. Participates in association with TBCD, in the disassembly of the apical junction complexes. Antagonizes the effect of TBCD on epithelial cell detachment and tight and adherens junctions disassembly. Together with ARL2, plays a role in the nuclear translocation, retention and transcriptional activity of STAT3. Component of a regulated secretory pathway involved in Ca(2+)-dependent release of acetylcholine. Required for normal progress through the cell cycle. Also regulates mitochondrial integrity and function. The protein is ADP-ribosylation factor-like protein 2 (ARL2) of Homo sapiens (Human).